Here is a 148-residue protein sequence, read N- to C-terminus: Large ribosomal subunit protein bL9 (148 aa).

The protein belongs to the bacterial ribosomal protein bL9 family.

Functionally, binds to the 23S rRNA. The protein is Large ribosomal subunit protein bL9 of Acetivibrio thermocellus (strain ATCC 27405 / DSM 1237 / JCM 9322 / NBRC 103400 / NCIMB 10682 / NRRL B-4536 / VPI 7372) (Clostridium thermocellum).